Consider the following 188-residue polypeptide: Inner kinetochore subunit cnl2 (188 aa).

The protein belongs to the NKP2 family. In terms of assembly, component of the inner kinetochore constitutive centromere-associated network (CCAN) (also known as central kinetochore Sim4 complex in fission yeast), which is composed of at least cnl2, cnp3, cnp20, fta1, fta2, fta3, fta4, fta6, fta7, mal2, mhf1, mhf2, mis6, mis15, mis17, sim4 and wip1.

The protein localises to the cytoplasm. Its subcellular location is the nucleus. The protein resides in the chromosome. It is found in the centromere. It localises to the kinetochore. Functionally, component of the kinetochore, a multiprotein complex that assembles on centromeric DNA and attaches chromosomes to spindle microtubules, mediating chromosome segregation and sister chromatid segregation during meiosis and mitosis. Component of the inner kinetochore constitutive centromere-associated network (CCAN), which serves as a structural platform for outer kinetochore assembly. The polypeptide is Inner kinetochore subunit cnl2 (cnl2) (Schizosaccharomyces pombe (strain 972 / ATCC 24843) (Fission yeast)).